Here is a 172-residue protein sequence, read N- to C-terminus: Caltractin (172 aa).

Residues Met-1–Gln-23 form a disordered region. The span at Thr-12–Lys-21 shows a compositional bias: polar residues. EF-hand domains lie at Glu-29–Glu-64, Pro-65–Glu-99, Asp-101–Asn-136, and Met-137–Phe-172. Residues Asp-42, Asp-44, Ser-46, Lys-48, and Glu-53 each contribute to the Ca(2+) site.

Belongs to the centrin family. In terms of assembly, monomer.

The protein resides in the cytoplasm. It is found in the cytoskeleton. Its subcellular location is the microtubule organizing center. The protein localises to the centrosome. Functionally, plays a fundamental role in microtubule-organizing center structure and function. This Naegleria gruberi (Amoeba) protein is Caltractin (CTN).